A 319-amino-acid chain; its full sequence is ATP-dependent 6-phosphofructokinase (319 aa).

Gly-11 is an ATP binding site. Residue 21–25 (RAVVR) participates in ADP binding. ATP is bound by residues 72 to 73 (RC) and 102 to 105 (GDGS). Mg(2+) is bound at residue Asp-103. 125 to 127 (TID) lines the substrate pocket. The Proton acceptor role is filled by Asp-127. Residue Arg-154 participates in ADP binding. Residues Arg-162 and 169–171 (MGR) each bind substrate. ADP contacts are provided by residues 185–187 (GAE), Arg-211, and 213–215 (KKH). Substrate is bound by residues Glu-222, Arg-243, and 249–252 (HVQR).

Belongs to the phosphofructokinase type A (PFKA) family. ATP-dependent PFK group I subfamily. Prokaryotic clade 'B1' sub-subfamily. As to quaternary structure, homotetramer. Mg(2+) is required as a cofactor.

It localises to the cytoplasm. The catalysed reaction is beta-D-fructose 6-phosphate + ATP = beta-D-fructose 1,6-bisphosphate + ADP + H(+). Its pathway is carbohydrate degradation; glycolysis; D-glyceraldehyde 3-phosphate and glycerone phosphate from D-glucose: step 3/4. Its activity is regulated as follows. Allosterically activated by ADP and other diphosphonucleosides, and allosterically inhibited by phosphoenolpyruvate. Catalyzes the phosphorylation of D-fructose 6-phosphate to fructose 1,6-bisphosphate by ATP, the first committing step of glycolysis. The chain is ATP-dependent 6-phosphofructokinase from Geobacillus sp. (strain WCH70).